The sequence spans 361 residues: Phosphoserine aminotransferase (361 aa).

Arg-43 is an L-glutamate binding site. Pyridoxal 5'-phosphate contacts are provided by residues 77-78 (AS), Trp-103, Thr-153, Asp-173, and Gln-196. N6-(pyridoxal phosphate)lysine is present on Lys-197. 238–239 (NT) contributes to the pyridoxal 5'-phosphate binding site.

The protein belongs to the class-V pyridoxal-phosphate-dependent aminotransferase family. SerC subfamily. As to quaternary structure, homodimer. Requires pyridoxal 5'-phosphate as cofactor.

The protein resides in the cytoplasm. The enzyme catalyses O-phospho-L-serine + 2-oxoglutarate = 3-phosphooxypyruvate + L-glutamate. The catalysed reaction is 4-(phosphooxy)-L-threonine + 2-oxoglutarate = (R)-3-hydroxy-2-oxo-4-phosphooxybutanoate + L-glutamate. It participates in amino-acid biosynthesis; L-serine biosynthesis; L-serine from 3-phospho-D-glycerate: step 2/3. It functions in the pathway cofactor biosynthesis; pyridoxine 5'-phosphate biosynthesis; pyridoxine 5'-phosphate from D-erythrose 4-phosphate: step 3/5. Catalyzes the reversible conversion of 3-phosphohydroxypyruvate to phosphoserine and of 3-hydroxy-2-oxo-4-phosphonooxybutanoate to phosphohydroxythreonine. The chain is Phosphoserine aminotransferase from Ectopseudomonas mendocina (strain ymp) (Pseudomonas mendocina).